The chain runs to 519 residues: Ribonuclease Y (519 aa).

A helical membrane pass occupies residues 3–23 (PLAILISILLSLFCLVVGYYV). Positions 209–272 (TVSVVNLPND…ETARIALDKL (64 aa)) constitute a KH domain. One can recognise an HD domain in the interval 335 to 428 (VLKHSMEVAF…VAAADALSAA (94 aa)).

Belongs to the RNase Y family.

It localises to the cell membrane. Its function is as follows. Endoribonuclease that initiates mRNA decay. The protein is Ribonuclease Y of Bacillus licheniformis (strain ATCC 14580 / DSM 13 / JCM 2505 / CCUG 7422 / NBRC 12200 / NCIMB 9375 / NCTC 10341 / NRRL NRS-1264 / Gibson 46).